Reading from the N-terminus, the 384-residue chain is 4-hydroxy-3-methylbut-2-en-1-yl diphosphate synthase (flavodoxin) (384 aa).

The [4Fe-4S] cluster site is built by Cys280, Cys283, Cys315, and Glu322.

Belongs to the IspG family. It depends on [4Fe-4S] cluster as a cofactor.

The catalysed reaction is (2E)-4-hydroxy-3-methylbut-2-enyl diphosphate + oxidized [flavodoxin] + H2O + 2 H(+) = 2-C-methyl-D-erythritol 2,4-cyclic diphosphate + reduced [flavodoxin]. It functions in the pathway isoprenoid biosynthesis; isopentenyl diphosphate biosynthesis via DXP pathway; isopentenyl diphosphate from 1-deoxy-D-xylulose 5-phosphate: step 5/6. Functionally, converts 2C-methyl-D-erythritol 2,4-cyclodiphosphate (ME-2,4cPP) into 1-hydroxy-2-methyl-2-(E)-butenyl 4-diphosphate. This Frankia alni (strain DSM 45986 / CECT 9034 / ACN14a) protein is 4-hydroxy-3-methylbut-2-en-1-yl diphosphate synthase (flavodoxin).